We begin with the raw amino-acid sequence, 318 residues long: NADH-ubiquinone oxidoreductase chain 1 (318 aa).

8 consecutive transmembrane segments (helical) span residues 2 to 22 (FMIN…FLTL), 69 to 89 (LLFT…WLPL), 100 to 120 (LGVL…LWSG), 146 to 166 (LAII…TNLI), 171 to 191 (HMWL…STLA), 231 to 251 (IMMM…TPLV), 253 to 273 (GIYT…FLWI), and 285 to 305 (LMHL…MWHV).

It belongs to the complex I subunit 1 family. In terms of assembly, core subunit of respiratory chain NADH dehydrogenase (Complex I) which is composed of 45 different subunits.

The protein localises to the mitochondrion inner membrane. The catalysed reaction is a ubiquinone + NADH + 5 H(+)(in) = a ubiquinol + NAD(+) + 4 H(+)(out). Functionally, core subunit of the mitochondrial membrane respiratory chain NADH dehydrogenase (Complex I) which catalyzes electron transfer from NADH through the respiratory chain, using ubiquinone as an electron acceptor. Essential for the catalytic activity and assembly of complex I. The protein is NADH-ubiquinone oxidoreductase chain 1 (MT-ND1) of Myrmecophaga tridactyla (Giant anteater).